Here is a 160-residue protein sequence, read N- to C-terminus: Troponin C, skeletal muscle (160 aa).

Thr2 is subject to N-acetylthreonine. EF-hand domains follow at residues 15–50 (EMIA…LGQT), 51–86 (PTKE…QMKE), 91–126 (KSEE…SGEH), and 127–160 (VTDE…EGVQ). Positions 28, 30, 34, 39, 64, 66, 68, 70, 75, 104, 106, 108, 110, 115, 140, 142, 144, 146, and 151 each coordinate Ca(2+).

This sequence belongs to the troponin C family.

Functionally, troponin is the central regulatory protein of striated muscle contraction. Tn consists of three components: Tn-I which is the inhibitor of actomyosin ATPase, Tn-T which contains the binding site for tropomyosin and Tn-C. The binding of calcium to Tn-C abolishes the inhibitory action of Tn on actin filaments. This Homo sapiens (Human) protein is Troponin C, skeletal muscle (TNNC2).